A 321-amino-acid polypeptide reads, in one-letter code: Coproporphyrin III ferrochelatase (321 aa).

Fe(2+)-binding residues include H185 and E267.

Belongs to the ferrochelatase family.

The protein resides in the cytoplasm. The enzyme catalyses Fe-coproporphyrin III + 2 H(+) = coproporphyrin III + Fe(2+). The protein operates within porphyrin-containing compound metabolism; protoheme biosynthesis. Functionally, involved in coproporphyrin-dependent heme b biosynthesis. Catalyzes the insertion of ferrous iron into coproporphyrin III to form Fe-coproporphyrin III. The sequence is that of Coproporphyrin III ferrochelatase from Lacticaseibacillus casei (strain BL23) (Lactobacillus casei).